We begin with the raw amino-acid sequence, 231 residues long: AA9 family lytic polysaccharide monooxygenase F (231 aa).

Residues 1–17 (MLPSISLLLAAALGTSA) form the signal peptide. The Cu(2+) site is built by H18, D50, and H89. D50 is a binding site for O2. Disulfide bonds link C59-C177 and C147-C231. O2 contacts are provided by H163 and Q172. Y174 lines the Cu(2+) pocket.

The protein belongs to the polysaccharide monooxygenase AA9 family. Cu(2+) serves as cofactor.

The protein localises to the secreted. The catalysed reaction is [(1-&gt;4)-beta-D-glucosyl]n+m + reduced acceptor + O2 = 4-dehydro-beta-D-glucosyl-[(1-&gt;4)-beta-D-glucosyl]n-1 + [(1-&gt;4)-beta-D-glucosyl]m + acceptor + H2O.. Its function is as follows. Lytic polysaccharide monooxygenase (LPMO) that depolymerizes crystalline and amorphous polysaccharides via the oxidation of scissile alpha- or beta-(1-4)-glycosidic bonds, yielding C1 oxidation products. Catalysis by LPMOs requires the reduction of the active-site copper from Cu(II) to Cu(I) by a reducing agent and H(2)O(2) or O(2) as a cosubstrate. In Neurospora crassa (strain ATCC 24698 / 74-OR23-1A / CBS 708.71 / DSM 1257 / FGSC 987), this protein is AA9 family lytic polysaccharide monooxygenase F (gh61-6).